Consider the following 1052-residue polypeptide: 3-hydroxy-3-methylglutaryl coenzyme A reductase mokG (1052 aa).

Transmembrane regions (helical) follow at residues 223-243 (VDMA…VSLF), 253-273 (FWLA…GLGV), 279-299 (VPVD…TVGF), 349-369 (GWSI…GAVF), 378-398 (FCFL…TFYA), and 440-460 (WKLI…SSFF). An SSD domain is found at 224–403 (DMAIIGLGYL…FTFYATILCV (180 aa)). The tract at residues 461-617 (YRIMGGFMTN…FKANQAESLT (157 aa)) is linker. The disordered stretch occupies residues 571 to 594 (APKESAAPAPPSSPASVPSAVPVP). Low complexity predominate over residues 584–594 (PASVPSAVPVP). Positions 618-1044 (DDELAELCLR…LVNAHMRHNR (427 aa)) are catalytic. Residue glutamate 734 is the Charge relay system of the active site. N-linked (GlcNAc...) asparagine glycosylation occurs at asparagine 798. Active-site charge relay system residues include lysine 867 and aspartate 943. Catalysis depends on histidine 1039, which acts as the Proton donor. Asparagine 1043 carries an N-linked (GlcNAc...) asparagine glycan.

It belongs to the HMG-CoA reductase family.

The protein localises to the endoplasmic reticulum membrane. It carries out the reaction (R)-mevalonate + 2 NADP(+) + CoA = (3S)-3-hydroxy-3-methylglutaryl-CoA + 2 NADPH + 2 H(+). The protein operates within polyketide biosynthesis; lovastatin biosynthesis. HMG-CoA reductase; part of the gene cluster that mediates the biosynthesis of monakolin K, also known as lovastatin, and which acts as a potent competitive inhibitor of HMG-CoA reductase. Monakolin K biosynthesis is performed in two stages. The first stage is catalyzed by the nonaketide synthase mokA, which belongs to type I polyketide synthases and catalyzes the iterative nine-step formation of the polyketide. This PKS stage is completed by the action of dehydrogenase mokE, which catalyzes the NADPH-dependent reduction of the unsaturated tetra-, penta- and heptaketide intermediates that arise during the mokA-mediated biosynthesis of the nonaketide chain and leads to dihydromonacolin L. Covalently bound dihydromonacolin L is released from mokA by the mokD esterase. Conversion of dihydromonacolin L into monacolin L and then monacolin J is subsequently performed with the participation of molecular oxygen and P450 monoogygenase mokC. Finally, mokF performs the conversion of monacoline J to monacoline K through the addition of the side-chain diketide moiety (2R)-2-methylbutanoate produced by the diketide synthase mokB. HMG-CoA reductase mokG may act as a down-regulator of monacolin K production. In Monascus pilosus (Red mold), this protein is 3-hydroxy-3-methylglutaryl coenzyme A reductase mokG.